The following is a 275-amino-acid chain: NH(3)-dependent NAD(+) synthetase (275 aa).

47–54 lines the ATP pocket; it reads GISGGQDS. D53 contributes to the Mg(2+) binding site. R141 contacts deamido-NAD(+). T161 contributes to the ATP binding site. E166 serves as a coordination point for Mg(2+). The deamido-NAD(+) site is built by K174 and D181. ATP is bound by residues K190 and T212. 261–262 is a deamido-NAD(+) binding site; that stretch reads HK.

The protein belongs to the NAD synthetase family. As to quaternary structure, homodimer.

The catalysed reaction is deamido-NAD(+) + NH4(+) + ATP = AMP + diphosphate + NAD(+) + H(+). It functions in the pathway cofactor biosynthesis; NAD(+) biosynthesis; NAD(+) from deamido-NAD(+) (ammonia route): step 1/1. Functionally, catalyzes the ATP-dependent amidation of deamido-NAD to form NAD. Uses ammonia as a nitrogen source. This Lacticaseibacillus casei (strain BL23) (Lactobacillus casei) protein is NH(3)-dependent NAD(+) synthetase.